Consider the following 76-residue polypeptide: Acyl carrier protein (76 aa).

Positions 1–76 (MATFDEVKEV…AAVDYIGSKQ (76 aa)) constitute a Carrier domain. An O-(pantetheine 4'-phosphoryl)serine modification is found at S36.

This sequence belongs to the acyl carrier protein (ACP) family. 4'-phosphopantetheine is transferred from CoA to a specific serine of apo-ACP by AcpS. This modification is essential for activity because fatty acids are bound in thioester linkage to the sulfhydryl of the prosthetic group.

It localises to the cytoplasm. It functions in the pathway lipid metabolism; fatty acid biosynthesis. Carrier of the growing fatty acid chain in fatty acid biosynthesis. The protein is Acyl carrier protein of Deinococcus geothermalis (strain DSM 11300 / CIP 105573 / AG-3a).